A 119-amino-acid chain; its full sequence is Immunoglobulin heavy variable 3-73 (119 aa).

Positions 1–19 (MEFGLSWVFLVAILKGVQC) are cleaved as a signal peptide. The segment at 20–44 (EVQLVESGGGLVQPGGSLKLSCAAS) is framework-1. In terms of domain architecture, Ig-like spans 20–119 (EVQLVESGGG…EDTAVYYCTR (100 aa)). Cys-41 and Cys-117 are disulfide-bonded. The interval 45 to 52 (GFTFSGSA) is complementarity-determining-1. The segment at 53 to 69 (MHWVRQASGKGLEWVGR) is framework-2. The complementarity-determining-2 stretch occupies residues 70–79 (IRSKANSYAT). The interval 80 to 117 (AYAASVKGRFTISRDDSKNTAYLQMNSLKTEDTAVYYC) is framework-3. The segment at 118 to 119 (TR) is complementarity-determining-3.

Immunoglobulins are composed of two identical heavy chains and two identical light chains; disulfide-linked.

Its subcellular location is the secreted. It is found in the cell membrane. In terms of biological role, v region of the variable domain of immunoglobulin heavy chains that participates in the antigen recognition. Immunoglobulins, also known as antibodies, are membrane-bound or secreted glycoproteins produced by B lymphocytes. In the recognition phase of humoral immunity, the membrane-bound immunoglobulins serve as receptors which, upon binding of a specific antigen, trigger the clonal expansion and differentiation of B lymphocytes into immunoglobulins-secreting plasma cells. Secreted immunoglobulins mediate the effector phase of humoral immunity, which results in the elimination of bound antigens. The antigen binding site is formed by the variable domain of one heavy chain, together with that of its associated light chain. Thus, each immunoglobulin has two antigen binding sites with remarkable affinity for a particular antigen. The variable domains are assembled by a process called V-(D)-J rearrangement and can then be subjected to somatic hypermutations which, after exposure to antigen and selection, allow affinity maturation for a particular antigen. The protein is Immunoglobulin heavy variable 3-73 of Homo sapiens (Human).